The sequence spans 206 residues: Ribosomal RNA small subunit methyltransferase G (206 aa).

Residues Gly-74, Leu-79, 125-126, and Arg-140 each bind S-adenosyl-L-methionine; that span reads VE.

This sequence belongs to the methyltransferase superfamily. RNA methyltransferase RsmG family.

The protein resides in the cytoplasm. The catalysed reaction is guanosine(527) in 16S rRNA + S-adenosyl-L-methionine = N(7)-methylguanosine(527) in 16S rRNA + S-adenosyl-L-homocysteine. Its function is as follows. Specifically methylates the N7 position of guanine in position 527 of 16S rRNA. The chain is Ribosomal RNA small subunit methyltransferase G from Shewanella putrefaciens (strain CN-32 / ATCC BAA-453).